We begin with the raw amino-acid sequence, 467 residues long: tRNA dimethylallyltransferase (467 aa).

The N-terminal 47 residues, 1-47 (MAAAAAARAVPVSSGFRGLRRTLPLVVILGATGTGKSTLALQLGQRL), are a transit peptide targeting the mitochondrion. Dimethylallyl diphosphate is bound at residue 32 to 37 (TGTGKS). Interaction with substrate tRNA stretches follow at residues 55-58 (DSMQ) and 183-187 (RKVAR). The segment at 221-230 (FPNPCILWLH) is core aggregation region. The interval 233-255 (QAVLDERLDKRVDDMLAAGLLEE) is interaction with isopentenylpyrophosphate transferase. 2 interaction with substrate tRNA regions span residues 281-283 (QSI) and 313-331 (ALKQVTKRYARKQNRWVKN). The Matrin-type zinc-finger motif lies at 395–425 (HMCDLCDRIIIGDREWAAHLKSKSHLHQLKK). The tract at residues 432–467 (DAVSATGSQSNSPDCDPERIEGESSGQHNQELKASV) is disordered. 2 positions are modified to phosphoserine: S443 and S455.

It belongs to the IPP transferase family.

It localises to the mitochondrion. Its subcellular location is the cytoplasm. The protein resides in the nucleus. It carries out the reaction adenosine(37) in tRNA + dimethylallyl diphosphate = N(6)-dimethylallyladenosine(37) in tRNA + diphosphate. Catalyzes the transfer of a dimethylallyl group onto the adenine at position 37 of both cytosolic and mitochondrial tRNAs, leading to the formation of N6-(dimethylallyl)adenosine (i6A37). Mediates modification of a limited subset of tRNAs: tRNA(Ser)(AGA), tRNA(Ser)(CGA), tRNA(Ser)(UGA), as well as partial modification of the selenocysteine tRNA(Ser)(UCA). TRIT1 is therefore required for selenoprotein expression. This Mus musculus (Mouse) protein is tRNA dimethylallyltransferase (Trit1).